The primary structure comprises 78 residues: NAD(P)H-quinone oxidoreductase subunit L (78 aa).

2 helical membrane-spanning segments follow: residues 10–30 (LFVIGTYLFLGTLYLVFIPLG) and 48–68 (LLIYSLVFLFFPGLILFAPFL).

The protein belongs to the complex I NdhL subunit family. NDH-1 can be composed of about 15 different subunits; different subcomplexes with different compositions have been identified which probably have different functions.

It is found in the cellular thylakoid membrane. The enzyme catalyses a plastoquinone + NADH + (n+1) H(+)(in) = a plastoquinol + NAD(+) + n H(+)(out). The catalysed reaction is a plastoquinone + NADPH + (n+1) H(+)(in) = a plastoquinol + NADP(+) + n H(+)(out). Functionally, NDH-1 shuttles electrons from an unknown electron donor, via FMN and iron-sulfur (Fe-S) centers, to quinones in the respiratory and/or the photosynthetic chain. The immediate electron acceptor for the enzyme in this species is believed to be plastoquinone. Couples the redox reaction to proton translocation, and thus conserves the redox energy in a proton gradient. Cyanobacterial NDH-1 also plays a role in inorganic carbon-concentration. The protein is NAD(P)H-quinone oxidoreductase subunit L of Prochlorococcus marinus (strain SARG / CCMP1375 / SS120).